We begin with the raw amino-acid sequence, 259 residues long: Ras-related protein Rab-34 (259 aa).

Methionine 1 is modified (N-acetylmethionine). Positions 62, 63, 64, 65, 66, 78, 81, and 84 each coordinate GTP. Threonine 66 contributes to the Mg(2+) binding site. The Switch 1 signature appears at arginine 71–phenylalanine 89. Mg(2+)-binding residues include threonine 84 and aspartate 107. The short motif at threonine 108 to alanine 127 is the Switch 2 element. GTP is bound by residues glycine 110, lysine 167, aspartate 169, and serine 198. At serine 241 the chain carries Phosphoserine. S-geranylgeranyl cysteine attachment occurs at residues cysteine 257 and cysteine 258.

Belongs to the small GTPase superfamily. Rab family. Interacts with RILP. The GTP-bound form interacts with REP15. Requires Mg(2+) as cofactor.

The protein localises to the cytoplasm. The protein resides in the golgi apparatus. Its subcellular location is the cytoplasmic vesicle. It is found in the phagosome. It localises to the phagosome membrane. The protein localises to the cell projection. The protein resides in the cilium. Its subcellular location is the cytoskeleton. It is found in the microtubule organizing center. It localises to the centrosome. The protein localises to the centriole. It catalyses the reaction GTP + H2O = GDP + phosphate + H(+). Its activity is regulated as follows. Regulated by guanine nucleotide exchange factors (GEFs) which promote the exchange of bound GDP for free GTP. Regulated by GTPase activating proteins (GAPs) which increase the GTP hydrolysis activity. Inhibited by GDP dissociation inhibitors (GDIs). Its function is as follows. The small GTPases Rab are key regulators of intracellular membrane trafficking, from the formation of transport vesicles to their fusion with membranes. Rabs cycle between an inactive GDP-bound form and an active GTP-bound form that is able to recruit to membranes different sets of downstream effectors directly responsible for vesicle formation, movement, tethering and fusion. RAB34 transports protein involved in the redistribution of lysosomes to the peri-Golgi region. Plays a role in the maturation of phagosomes that engulf pathogens, such as S.aureus and M.tuberculosis. Plays a role in the fusion of phagosomes with lysosomes. Required for the early steps of intracellular ciliogenesis, the cilium assembly pathway initiated by trafficking and docking of ciliary vesicles to the centrioles in the cytoplasm, followed by axoneme formation in the cytoplasm. After axoneme elongation, the centrioles migrate close to the cell surface so that ciliary vesicles can fuse with the plasma membrane to expose cilia to the extracellular space. It seems dispensable for ciliogenesis via the extracellular pathway where cilium assembly begins after migration and docking of the centriole to the plasma membrane. Also acts as a positive regulator of hedgehog signaling and regulates ciliary function. The protein is Ras-related protein Rab-34 of Mus musculus (Mouse).